Consider the following 343-residue polypeptide: Methionine import ATP-binding protein MetN (343 aa).

Residues 2–241 form the ABC transporter domain; it reads IKLSNITKVF…PKTPLAQKFI (240 aa). 40–46 is a binding site for ATP; that stretch reads SGAGKST. Residues 265 to 343 form a C2 domain region; the sequence is CVPMLRLEFT…HVKVEVLGYV (79 aa). L-methionine is bound by residues 278 to 283 and 295 to 296; these read VDAPLL and NI.

Belongs to the ABC transporter superfamily. Methionine importer (TC 3.A.1.24) family. In terms of assembly, the complex is composed of two ATP-binding proteins (MetN), two transmembrane proteins (MetI) and a solute-binding protein (MetQ).

The protein resides in the cell inner membrane. The catalysed reaction is L-methionine(out) + ATP + H2O = L-methionine(in) + ADP + phosphate + H(+). It carries out the reaction D-methionine(out) + ATP + H2O = D-methionine(in) + ADP + phosphate + H(+). With respect to regulation, ATPase activity is inhibited by intracellular L-methionine. Binding of methionine to the dimerized C-terminal regulatory domain stabilizes an inward-facing, ATPase-inactive conformation of the transporter, and as a consequence, the rate of ATP hydrolysis decreases. ADP is a competitive inhibitor. Part of the ABC transporter complex MetNIQ involved in methionine import. Responsible for energy coupling to the transport system. It has also been shown to be involved in formyl-L-methionine transport. The chain is Methionine import ATP-binding protein MetN from Escherichia coli (strain K12).